Here is a 1248-residue protein sequence, read N- to C-terminus: Structural maintenance of chromosomes protein 1B (1248 aa).

Residue 32 to 39 (GPNGSGKS) coordinates ATP. Residues 163–502 (EFIGEYEAKK…EGKRQQKRAE (340 aa)) adopt a coiled-coil conformation. One can recognise an SMC hinge domain in the interval 514–629 (SVFGRLLDLC…ETVEEARHIA (116 aa)). Residues Lys648, Lys713, and Lys1032 each carry the N6-acetyllysine modification. Positions 666-912 (WDEKELHNLR…REVGKLQKEV (247 aa)) form a coiled coil. Basic and acidic residues predominate over residues 1219–1228 (PDTEDQEGSR). The tract at residues 1219–1248 (PDTEDQEGSRSHRKPRVPRVSMSPKSPQSR) is disordered.

Belongs to the SMC family. SMC1 subfamily. As to quaternary structure, forms a heterodimer with SMC3. Component of a meiosis-specific cohesin complex, probably composed of the SMC1B and SMC3 heterodimer attached via their SMC hinge domain, RAD21 (or its meiosis-specific related protein REC8), which link them, and STAG3, which interacts with RAD21 or REC8. The cohesin complex interacts with the cohesin loading complex subunits NIPBL/Scc2 (via HEAT repeats) and MAU2/Scc4. NIPBL directly contacts all members of the complex, RAD21, SMC1A/B, SMC3 and STAG1. In terms of tissue distribution, spermatocytes (at protein level). Testis and ovary specific. Not expressed in somatic cells.

It localises to the nucleus. Its subcellular location is the chromosome. The protein resides in the centromere. Meiosis-specific component of cohesin complex. Required for the maintenance of meiotic cohesion, but not, or only to a minor extent, for its establishment. Contributes to axial element (AE) formation and the organization of chromatin loops along the AE. Plays a key role in synapsis, recombination and chromosome movements. The cohesin complex is required for the cohesion of sister chromatids after DNA replication. The cohesin complex apparently forms a large proteinaceous ring within which sister chromatids can be trapped. At anaphase, the complex is cleaved and dissociates from chromatin, allowing sister chromatids to segregate. The meiosis-specific cohesin complex probably replaces mitosis specific cohesin complex when it dissociates from chromatin during prophase I. The polypeptide is Structural maintenance of chromosomes protein 1B (Smc1b) (Mus musculus (Mouse)).